Here is a 213-residue protein sequence, read N- to C-terminus: Uridine kinase (213 aa).

15 to 22 (GASASGKS) contacts ATP.

It belongs to the uridine kinase family.

Its subcellular location is the cytoplasm. The enzyme catalyses uridine + ATP = UMP + ADP + H(+). It carries out the reaction cytidine + ATP = CMP + ADP + H(+). It functions in the pathway pyrimidine metabolism; CTP biosynthesis via salvage pathway; CTP from cytidine: step 1/3. It participates in pyrimidine metabolism; UMP biosynthesis via salvage pathway; UMP from uridine: step 1/1. The chain is Uridine kinase from Escherichia fergusonii (strain ATCC 35469 / DSM 13698 / CCUG 18766 / IAM 14443 / JCM 21226 / LMG 7866 / NBRC 102419 / NCTC 12128 / CDC 0568-73).